Consider the following 526-residue polypeptide: MFS-type transporter clz19 (526 aa).

The tract at residues Met1–His49 is disordered. Positions Ser32 to His49 are enriched in basic and acidic residues. Asn38 carries N-linked (GlcNAc...) asparagine glycosylation. Residues Ala59–Tyr79 form a helical membrane-spanning segment. Asn97 is a glycosylation site (N-linked (GlcNAc...) asparagine). 3 helical membrane-spanning segments follow: residues Val126–Leu143, Ala186–Leu206, and Ala214–Phe234. 2 N-linked (GlcNAc...) asparagine glycosylation sites follow: Asn238 and Asn253. 6 consecutive transmembrane segments (helical) span residues Phe294 to Phe314, Tyr322 to Leu342, Leu384 to Leu404, Val411 to Ala431, Ala446 to Val466, and Ile473 to Leu493.

The protein belongs to the major facilitator superfamily.

The protein localises to the membrane. Its function is as follows. MFS-type transporter; part of the gene cluster that mediates the biosynthesis of squalestatin S1 (SQS1, also known as zaragozic acid A), a heavily oxidized fungal polyketide that offers potent cholesterol lowering activity by targeting squalene synthase (SS). This is MFS-type transporter clz19 from Cochliobolus lunatus (Filamentous fungus).